Consider the following 102-residue polypeptide: Peptide chaperone MftB (102 aa).

The protein belongs to the peptide chaperone MftB family.

Peptide chaperone involved in the biosynthesis of the enzyme cofactor mycofactocin (MFT). Binds MftA and MftC with high affinity, and is essential for MftC activity on MftA, likely via the formation of a ternary complex. Is required for the in vivo ethanol assimilation in M.smegmatis. The protein is Peptide chaperone MftB of Mycolicibacterium smegmatis (strain ATCC 700084 / mc(2)155) (Mycobacterium smegmatis).